The primary structure comprises 306 residues: sn-1-specific diacylglycerol lipase ABHD11 (306 aa).

The segment at 19–40 is disordered; that stretch reads GPSFARVPVAPSSSSGGRGGAE. Over residues 23–33 the composition is skewed to low complexity; sequence ARVPVAPSSSS. Lysine 78 is modified (N6-succinyllysine). Residues serine 132, aspartate 228, and histidine 287 each act as charge relay system in the active site.

This sequence belongs to the AB hydrolase superfamily. Interacts with OGDH and DLST; this interaction maintains the functional lipoylation of the 2-oxoglutarate dehydrogenase complex. Post-translationally, phosphorylated. Ubiquitously expressed. Highly expressed in small intestine, prostate and thyroid, while aorta and colon tissues exhibit weak expression levels.

Its subcellular location is the mitochondrion. It is found in the mitochondrion matrix. It catalyses the reaction 1-octadecanoyl-2-(5Z,8Z,11Z,14Z-eicosatetraenoyl)-sn-glycerol + H2O = 2-(5Z,8Z,11Z,14Z-eicosatetraenoyl)-glycerol + octadecanoate + H(+). The enzyme catalyses a 1,2-diacyl-sn-glycerol + H2O = a 2-acylglycerol + a fatty acid + H(+). The catalysed reaction is a 1,3-diacyl-sn-glycerol + H2O = a 1-acyl-sn-glycerol + a fatty acid + H(+). It carries out the reaction 1-octadecanoyl-2-(9Z-octadecenoyl)-sn-glycerol + H2O = 2-(9Z-octadecenoyl)-glycerol + octadecanoate + H(+). It catalyses the reaction 1-octadecanoyl-2-(4Z,7Z,10Z,13Z,16Z,19Z-docosahexaenoyl)-sn-glycerol + H2O = 2-(4Z,7Z,10Z,13Z,16Z,19Z-docosahexaenoyl)-glycerol + octadecanoate + H(+). The enzyme catalyses 1,2-didecanoylglycerol + H2O = decanoylglycerol + decanoate + H(+). Catalyzes the hydrolysis of diacylglycerol in vitro and may function as a key regulator in lipid metabolism, namely by regulating the intracellular levels of diacylglycerol. 1,2-diacyl-sn-glycerols are the preferred substrate over 1,3-diacyl-sn-glycerols. The enzyme hydrolyzes stearate in preference to palmitate from the sn-1 position of 1,2-diacyl-sn-glycerols. Maintains the functional lipoylation of the 2-oxoglutarate dehydrogenase complex (OGDHc) through its interaction with the OGDHc by preventing the formation of lipoyl adducts. In addition, is also required for the expansion and differentiation of embryonic stem cells (ESCs). The chain is sn-1-specific diacylglycerol lipase ABHD11 from Homo sapiens (Human).